The chain runs to 412 residues: Probable tRNA sulfurtransferase (412 aa).

A disordered region spans residues 1–22; the sequence is MPDIFTDNTDKQDSDPSRQGFE. The THUMP domain occupies 82-190; that stretch reads PRAAEAAADV…QNLAYVYLET (109 aa). ATP is bound by residues 208–209, K292, G314, and Q323; that span reads LM.

This sequence belongs to the ThiI family.

The protein resides in the cytoplasm. It carries out the reaction [ThiI sulfur-carrier protein]-S-sulfanyl-L-cysteine + a uridine in tRNA + 2 reduced [2Fe-2S]-[ferredoxin] + ATP + H(+) = [ThiI sulfur-carrier protein]-L-cysteine + a 4-thiouridine in tRNA + 2 oxidized [2Fe-2S]-[ferredoxin] + AMP + diphosphate. It catalyses the reaction [ThiS sulfur-carrier protein]-C-terminal Gly-Gly-AMP + S-sulfanyl-L-cysteinyl-[cysteine desulfurase] + AH2 = [ThiS sulfur-carrier protein]-C-terminal-Gly-aminoethanethioate + L-cysteinyl-[cysteine desulfurase] + A + AMP + 2 H(+). The protein operates within cofactor biosynthesis; thiamine diphosphate biosynthesis. In terms of biological role, catalyzes the ATP-dependent transfer of a sulfur to tRNA to produce 4-thiouridine in position 8 of tRNAs, which functions as a near-UV photosensor. Also catalyzes the transfer of sulfur to the sulfur carrier protein ThiS, forming ThiS-thiocarboxylate. This is a step in the synthesis of thiazole, in the thiamine biosynthesis pathway. The sulfur is donated as persulfide by IscS. The protein is Probable tRNA sulfurtransferase of Methanosarcina acetivorans (strain ATCC 35395 / DSM 2834 / JCM 12185 / C2A).